A 343-amino-acid chain; its full sequence is MDFLVLFLFYLAFLLICVVLICIFTKSQRLKAVVLGGAQVCSRVIPQCLQRAVQTLLHQLFHTRHPTFIVLHLLLQGLVYAEYTCEVFGYCRELEFSLPYLLLPYVLLSVNLVFFTLTCAANPGTITKANESFLLQVYKFDDVMFPKNSRCPTCDLRKPARSKHCRLCDRCVHRFDHHCVWVNNCIGAWNTRYFLIYLLTLTASAATIATVTAAFLLRLVTVSDLYQETYLDDVGHFQAVDTVFLIQHLFLAFPRIVFLLGFVIVLSMLLAGYLCFALYLAATNQTTNEWYKGDWAWCQRWPLVAWSPSAEPRIHQNIHSHGFRSNLREIFLPATPSYKKKEK.

Residues 1–2 (MD) lie on the Lumenal side of the membrane. The helical transmembrane segment at 3–23 (FLVLFLFYLAFLLICVVLICI) threads the bilayer. Over 24–67 (FTKSQRLKAVVLGGAQVCSRVIPQCLQRAVQTLLHQLFHTRHPT) the chain is Cytoplasmic. The chain crosses the membrane as a helical span at residues 68–88 (FIVLHLLLQGLVYAEYTCEVF). The Lumenal portion of the chain corresponds to 89 to 100 (GYCRELEFSLPY). Residues 101–121 (LLLPYVLLSVNLVFFTLTCAA) traverse the membrane as a helical segment. At 122–193 (NPGTITKANE…NCIGAWNTRY (72 aa)) the chain is on the cytoplasmic side. Residues 149–199 (SRCPTCDLRKPARSKHCRLCDRCVHRFDHHCVWVNNCIGAWNTRYFLIYLL) enclose the DHHC domain. The S-palmitoyl cysteine intermediate role is filled by Cys179. The helical transmembrane segment at 194–214 (FLIYLLTLTASAATIATVTAA) threads the bilayer. Over 215–255 (FLLRLVTVSDLYQETYLDDVGHFQAVDTVFLIQHLFLAFPR) the chain is Lumenal. A helical membrane pass occupies residues 256–276 (IVFLLGFVIVLSMLLAGYLCF). Residues 277–343 (ALYLAATNQT…ATPSYKKKEK (67 aa)) are Cytoplasmic-facing. The short motif at 340–343 (KKEK) is the Di-lysine motif element.

The protein belongs to the DHHC palmitoyltransferase family. In terms of assembly, interacts with CPT1A.

Its subcellular location is the endoplasmic reticulum membrane. It localises to the golgi apparatus membrane. The protein localises to the cell membrane. The catalysed reaction is L-cysteinyl-[protein] + hexadecanoyl-CoA = S-hexadecanoyl-L-cysteinyl-[protein] + CoA. Functionally, palmitoyltransferase that could catalyze the addition of palmitate onto protein substrates including the D(2) dopamine receptor DRD2, GSK3B or MAVS. Mediates GSK3B palmitoylation to prevent its AKT1-mediated phosphorylation leading to activation of the STAT3 signaling pathway. Also catalyzes MAVS palmitoylation which promotes its stabilization and activation by inhibiting 'Lys-48'- but facilitating 'Lys-63'-linked ubiquitination. This is Palmitoyltransferase ZDHHC4 from Mus musculus (Mouse).